Consider the following 175-residue polypeptide: Large ribosomal subunit protein uL30 (175 aa).

It belongs to the universal ribosomal protein uL30 family. In terms of assembly, part of the 50S ribosomal subunit.

The protein is Large ribosomal subunit protein uL30 of Pyrobaculum neutrophilum (strain DSM 2338 / JCM 9278 / NBRC 100436 / V24Sta) (Thermoproteus neutrophilus).